The sequence spans 757 residues: Subtilisin-like protease SBT1.7 (757 aa).

The first 24 residues, 1-24, serve as a signal peptide directing secretion; sequence MSSSFLSSTAFFLLLCLGFCHVSS. Positions 25 to 106 are excised as a propeptide; that stretch reads SSSDQGTYIV…VLPEHRYELH (82 aa). The Inhibitor I9 domain occupies 31–106; it reads TYIVHMAKSQ…VLPEHRYELH (76 aa). Residues 102–610 form the Peptidase S8 domain; that stretch reads RYELHTTRTP…AGHVSPTTAT (509 aa). Asp139 (charge relay system) is an active-site residue. A glycan (N-linked (GlcNAc...) asparagine) is linked at Asn170. The disordered stretch occupies residues 196-219; the sequence is PIDESKESRSPRDDDGHGTHTSST. Basic and acidic residues predominate over residues 198 to 213; that stretch reads DESKESRSPRDDDGHG. The active-site Charge relay system is His212. Residues Asn352, Asn376, and Asn379 are each glycosylated (N-linked (GlcNAc...) asparagine). The active-site Charge relay system is the Ser542. Asn631 and Asn644 each carry an N-linked (GlcNAc...) asparagine glycan.

Belongs to the peptidase S8 family. Expressed in immature siliques and at lower levels in stems and flowers. Widely expressed at low levels.

It localises to the secreted. The protein localises to the cell wall. Its activity is regulated as follows. Activated by calcium. Inhibited by the serine protease inhibitors 4-(2-aminoethyl)benzenesulphonyl fluoride (AEBSF), PMSF, di-isopropyl phosphofluoridate (DFP) and soybean trypsin inhibitor (SBTI). Not inhibited by benzamidine or iodoacetamide. Leupeptin and pepstatin A have a minor inhibitory action. Its function is as follows. Serine protease. Has a substrate preference for the hydrophobic residues Phe and Ala and the basic residue Asp in the P1 position, and for Asp, Leu or Ala in the P1' position. Essential for mucilage release from seed coats. Triggers the accumulation and/or activation of cell wall modifying enzymes necessary either for the loosening of the outer primary cell wall, or to facilitate swelling of the mucilage. In Arabidopsis thaliana (Mouse-ear cress), this protein is Subtilisin-like protease SBT1.7.